Here is a 206-residue protein sequence, read N- to C-terminus: Large ribosomal subunit protein uL4 (206 aa).

Residues 66-77 (QKGTGRARHHSA) show a composition bias toward basic residues. Positions 66-96 (QKGTGRARHHSARAPQFRGGGQAHGPVVRSH) are disordered.

This sequence belongs to the universal ribosomal protein uL4 family. In terms of assembly, part of the 50S ribosomal subunit.

One of the primary rRNA binding proteins, this protein initially binds near the 5'-end of the 23S rRNA. It is important during the early stages of 50S assembly. It makes multiple contacts with different domains of the 23S rRNA in the assembled 50S subunit and ribosome. Functionally, forms part of the polypeptide exit tunnel. The protein is Large ribosomal subunit protein uL4 of Brucella anthropi (strain ATCC 49188 / DSM 6882 / CCUG 24695 / JCM 21032 / LMG 3331 / NBRC 15819 / NCTC 12168 / Alc 37) (Ochrobactrum anthropi).